The primary structure comprises 429 residues: Zinc-regulated GTPase metalloprotein activator 1 (429 aa).

Positions 15-22 (GELPCLVT) match the psi-PxLVp motif motif. Residue 78 to 85 (GYLGSGKS) participates in GTP binding. 3 residues coordinate Zn(2+): cysteine 136, cysteine 138, and cysteine 139. The CXCC motif motif lies at 136 to 139 (CLCC). Residues 139 to 143 (CSLKN) and 244 to 247 (NKYD) each bind GTP. The CobW C-terminal domain maps to 362 to 428 (RDWEVQRTKG…SIEELLRKTL (67 aa)).

It belongs to the SIMIBI class G3E GTPase family. ZNG1 subfamily.

The enzyme catalyses GTP + H2O = GDP + phosphate + H(+). Its function is as follows. Zinc chaperone that directly transfers zinc cofactor to target metalloproteins, thereby activating them. Catalyzes zinc insertion into the active site of methionine aminopeptidase MAP1, which function to cleave the initiator methionine from polypeptides during or after protein translation. Mechanistically, the N-terminal psi-PxLVp motif binds to the C6H2-type zinc finger of inactive form of MAP1. After formation of the docked complex, zinc is transferred from the CXCC motif in the GTPase domain of ZNG1 to the zinc binding site in the peptidase domain of MAP1 in a process requiring GTP hydrolysis. GTP/GDP exchange is required for release of active MAP1. The protein is Zinc-regulated GTPase metalloprotein activator 1 of Saccharomyces cerevisiae (strain ATCC 204508 / S288c) (Baker's yeast).